The chain runs to 314 residues: DNA-directed RNA polymerase subunit alpha (314 aa).

Residues 1–228 (MIEIEKPKIE…EHLNIFVGLT (228 aa)) are alpha N-terminal domain (alpha-NTD). The alpha C-terminal domain (alpha-CTD) stretch occupies residues 245-314 (KEKVLEMTIE…ELGLSLRKDD (70 aa)).

Belongs to the RNA polymerase alpha chain family. As to quaternary structure, homodimer. The RNAP catalytic core consists of 2 alpha, 1 beta, 1 beta' and 1 omega subunit. When a sigma factor is associated with the core the holoenzyme is formed, which can initiate transcription.

The enzyme catalyses RNA(n) + a ribonucleoside 5'-triphosphate = RNA(n+1) + diphosphate. Functionally, DNA-dependent RNA polymerase catalyzes the transcription of DNA into RNA using the four ribonucleoside triphosphates as substrates. The chain is DNA-directed RNA polymerase subunit alpha from Geobacillus thermodenitrificans (strain NG80-2).